A 157-amino-acid polypeptide reads, in one-letter code: Eukaryotic translation initiation factor 5A-2 (157 aa).

N-acetylserine is present on serine 2. Position 2 is a phosphoserine (serine 2). The residue at position 7 (threonine 7) is a Phosphothreonine. Position 51 is a hypusine (lysine 51). At serine 74 the chain carries Phosphoserine. Residue lysine 86 forms a Glycyl lysine isopeptide (Lys-Gly) (interchain with G-Cter in ubiquitin) linkage.

The protein belongs to the eIF-5A family. Homodimer. Binds to 80S ribosomes. Actively translating ribosomes show mutually exclusive binding of eIF5a (HYP2 or ANB1) and EFT1/eEF2. Interacts with DYS1 and LIA1. In terms of processing, lys-51 undergoes hypusination, a unique post-translational modification that consists in the addition of a butylamino group from spermidine to lysine side chain, leading to the formation of the unusual amino acid hypusine. eIF-5As are the only known proteins to undergo this modification, which is essential for their function.

The protein resides in the cytoplasm. In terms of biological role, translation factor that promotes translation elongation and termination, particularly upon ribosome stalling at specific amino acid sequence contexts. Binds between the exit (E) and peptidyl (P) site of the ribosome and promotes rescue of stalled ribosome: specifically required for efficient translation of polyproline-containing peptides as well as other motifs that stall the ribosome. Acts as ribosome quality control (RQC) cofactor by joining the RQC complex to facilitate peptidyl transfer during CAT tailing step. Involved in actin dynamics and cell cycle progression, mRNA decay and probably in a pathway involved in stress response and maintenance of cell wall integrity. This chain is Eukaryotic translation initiation factor 5A-2 (ANB1), found in Saccharomyces cerevisiae (strain ATCC 204508 / S288c) (Baker's yeast).